We begin with the raw amino-acid sequence, 91 residues long: uncharacterized protein (91 aa).

A helical transmembrane segment spans residues 12–34 (FAIVYANITFLFYYLLDFTLPFH).

The protein localises to the membrane. This is an uncharacterized protein from Saccharomyces cerevisiae (strain ATCC 204508 / S288c) (Baker's yeast).